A 378-amino-acid polypeptide reads, in one-letter code: Glutamate 5-kinase (378 aa).

Residue Lys-21 participates in ATP binding. Positions 61, 148, and 160 each coordinate substrate. Position 180–181 (180–181 (TD)) interacts with ATP. The PUA domain occupies 286 to 364 (RGTLVLDAGA…RRIEELLGYM (79 aa)).

The protein belongs to the glutamate 5-kinase family.

The protein resides in the cytoplasm. The enzyme catalyses L-glutamate + ATP = L-glutamyl 5-phosphate + ADP. Its pathway is amino-acid biosynthesis; L-proline biosynthesis; L-glutamate 5-semialdehyde from L-glutamate: step 1/2. In terms of biological role, catalyzes the transfer of a phosphate group to glutamate to form L-glutamate 5-phosphate. This chain is Glutamate 5-kinase, found in Chromohalobacter salexigens (strain ATCC BAA-138 / DSM 3043 / CIP 106854 / NCIMB 13768 / 1H11).